The sequence spans 463 residues: Ribulose bisphosphate carboxylase (463 aa).

N116 serves as a coordination point for substrate. Catalysis depends on K171, which acts as the Proton acceptor. K173 is a binding site for substrate. Mg(2+)-binding residues include K196, D198, and E199. N6-carboxylysine is present on K196. H294 functions as the Proton acceptor in the catalytic mechanism. Residues R295, H328, and S375 each contribute to the substrate site.

Belongs to the RuBisCO large chain family. Type II subfamily. Homodimer. The cofactor is Mg(2+).

It carries out the reaction 2 (2R)-3-phosphoglycerate + 2 H(+) = D-ribulose 1,5-bisphosphate + CO2 + H2O. The catalysed reaction is D-ribulose 1,5-bisphosphate + O2 = 2-phosphoglycolate + (2R)-3-phosphoglycerate + 2 H(+). Its function is as follows. RuBisCO catalyzes two reactions: the carboxylation of D-ribulose 1,5-bisphosphate, the primary event in carbon dioxide fixation, as well as the oxidative fragmentation of the pentose substrate. Both reactions occur simultaneously and in competition at the same active site. The sequence is that of Ribulose bisphosphate carboxylase from Hydrogenovibrio marinus.